The chain runs to 196 residues: Adenylate kinase (196 aa).

An ATP-binding site is contributed by 9–17; it reads GIPGVGKST.

It belongs to the archaeal adenylate kinase family.

It is found in the cytoplasm. The catalysed reaction is AMP + ATP = 2 ADP. The polypeptide is Adenylate kinase (adkA) (Pyrococcus horikoshii (strain ATCC 700860 / DSM 12428 / JCM 9974 / NBRC 100139 / OT-3)).